Here is a 187-residue protein sequence, read N- to C-terminus: Protein GrpE (187 aa).

Positions M1–E17 are enriched in low complexity. Residues M1 to E27 are disordered.

It belongs to the GrpE family. In terms of assembly, homodimer.

Its subcellular location is the cytoplasm. Participates actively in the response to hyperosmotic and heat shock by preventing the aggregation of stress-denatured proteins, in association with DnaK and GrpE. It is the nucleotide exchange factor for DnaK and may function as a thermosensor. Unfolded proteins bind initially to DnaJ; upon interaction with the DnaJ-bound protein, DnaK hydrolyzes its bound ATP, resulting in the formation of a stable complex. GrpE releases ADP from DnaK; ATP binding to DnaK triggers the release of the substrate protein, thus completing the reaction cycle. Several rounds of ATP-dependent interactions between DnaJ, DnaK and GrpE are required for fully efficient folding. This is Protein GrpE from Thioalkalivibrio sulfidiphilus (strain HL-EbGR7).